The sequence spans 99 residues: Nucleoid-associated protein SSA_0326 (99 aa).

Over residues 1–15 (MMNMQSMMKQAQKLQ) the composition is skewed to low complexity. Positions 1 to 23 (MMNMQSMMKQAQKLQKQMEKGQA) are disordered.

The protein belongs to the YbaB/EbfC family. Homodimer.

It localises to the cytoplasm. Its subcellular location is the nucleoid. Functionally, binds to DNA and alters its conformation. May be involved in regulation of gene expression, nucleoid organization and DNA protection. This is Nucleoid-associated protein SSA_0326 from Streptococcus sanguinis (strain SK36).